A 460-amino-acid polypeptide reads, in one-letter code: A-type ATP synthase subunit B (460 aa).

Belongs to the ATPase alpha/beta chains family. Has multiple subunits with at least A(3), B(3), C, D, E, F, H, I and proteolipid K(x).

It is found in the cell membrane. Component of the A-type ATP synthase that produces ATP from ADP in the presence of a proton gradient across the membrane. The B chain is a regulatory subunit. This Thermoplasma acidophilum (strain ATCC 25905 / DSM 1728 / JCM 9062 / NBRC 15155 / AMRC-C165) protein is A-type ATP synthase subunit B.